A 331-amino-acid polypeptide reads, in one-letter code: Spondin-2 (331 aa).

The N-terminal stretch at 1–26 (MENPSPAAALGKALCALLLATLGAAG) is a signal peptide. A Spondin domain is found at 31-221 (GESICSARAL…EITSSSPSHP (191 aa)). Residues Cys35 and Cys171 are joined by a disulfide bond. Glu141 provides a ligand contact to a divalent metal cation. Ca(2+)-binding residues include Asp160, Asp188, and Asp192. In terms of domain architecture, TSP type-1 spans 277–331 (DCEVSLWSSWGLCGGHCGRLGTKSRTRYVRVQPANNGSPCPELEEEAECVPDNCV). Trp283 is a glycosylation site (C-linked (Man) tryptophan).

In terms of assembly, monomer. Interacts with integrin. As to expression, expressed in normal lung tissue but not in lung carcinoma cell lines.

It is found in the secreted. Its subcellular location is the extracellular space. It localises to the extracellular matrix. Cell adhesion protein that promotes adhesion and outgrowth of hippocampal embryonic neurons. Binds directly to bacteria and their components and functions as an opsonin for macrophage phagocytosis of bacteria. Essential in the initiation of the innate immune response and represents a unique pattern-recognition molecule in the ECM for microbial pathogens. Binds bacterial lipopolysaccharide (LPS). In Homo sapiens (Human), this protein is Spondin-2 (SPON2).